A 306-amino-acid chain; its full sequence is Protein FAM228A (306 aa).

The segment at 237 to 277 (HASKLSQQNKGAEKKGLALGTRAQRPRSWAAADSPQGTPLV) is disordered. S270 bears the Phosphoserine mark.

Belongs to the FAM228 family.

The sequence is that of Protein FAM228A (Fam228a) from Rattus norvegicus (Rat).